The following is a 495-amino-acid chain: Glycogen synthase (495 aa).

Residue Lys-24 coordinates ADP-alpha-D-glucose.

This sequence belongs to the glycosyltransferase 1 family. Bacterial/plant glycogen synthase subfamily.

It catalyses the reaction [(1-&gt;4)-alpha-D-glucosyl](n) + ADP-alpha-D-glucose = [(1-&gt;4)-alpha-D-glucosyl](n+1) + ADP + H(+). It participates in glycan biosynthesis; glycogen biosynthesis. Synthesizes alpha-1,4-glucan chains using ADP-glucose. This Nitrosomonas europaea (strain ATCC 19718 / CIP 103999 / KCTC 2705 / NBRC 14298) protein is Glycogen synthase.